Here is a 626-residue protein sequence, read N- to C-terminus: Trehalase (626 aa).

A run of 2 helical transmembrane segments spans residues 20–40 (KLFL…FIYL) and 45–65 (SLFF…MLDS). The alpha,alpha-trehalose site is built by Arg-224, Asp-232, Asn-268, Arg-277, Gln-279, Arg-344, and Glu-346. Residues Asp-380 and Glu-580 each act as proton donor/acceptor in the active site. 2 residues coordinate alpha,alpha-trehalose: Glu-580 and Glu-595.

Belongs to the glycosyl hydrolase 37 family. As to quaternary structure, forms homodimers. Highly expressed in flowers. Expressed at low levels in leaves and stems. Expressed in guard cells.

The protein localises to the cell membrane. It is found in the cytoplasm. The protein resides in the nucleus. The catalysed reaction is alpha,alpha-trehalose + H2O = alpha-D-glucose + beta-D-glucose. Functionally, involved in the regulation of trehalose content by hydrolyzing trehalose to glucose. May play a role in the regulation of abscisic acid-induced stomatal closure in response to drought stress. The polypeptide is Trehalase (TRE1) (Arabidopsis thaliana (Mouse-ear cress)).